Here is a 128-residue protein sequence, read N- to C-terminus: Large ribosomal subunit protein bL12 (128 aa).

It belongs to the bacterial ribosomal protein bL12 family. As to quaternary structure, homodimer. Part of the ribosomal stalk of the 50S ribosomal subunit. Forms a multimeric L10(L12)X complex, where L10 forms an elongated spine to which 2 to 4 L12 dimers bind in a sequential fashion. Binds GTP-bound translation factors.

Forms part of the ribosomal stalk which helps the ribosome interact with GTP-bound translation factors. Is thus essential for accurate translation. The sequence is that of Large ribosomal subunit protein bL12 from Petrotoga mobilis (strain DSM 10674 / SJ95).